Consider the following 288-residue polypeptide: Heme oxygenase 1 (288 aa).

Residues 1 to 265 lie on the Cytoplasmic side of the membrane; that stretch reads MERPQPDSMP…KPPLNTRSQA (265 aa). Residues K18, H25, Y134, and R183 each coordinate heme b. Residues 223–260 form a disordered region; sequence HDTKDQSPSRAPGLRQRASNKVQDSAPVETPRGKPPLN. At S229 the chain carries Phosphoserine. A helical; Anchor for type IV membrane protein transmembrane segment spans residues 266–288; the sequence is PLLRWVLTLSFLVATVAVGLYAM.

Belongs to the heme oxygenase family. In terms of assembly, (Microbial infection) Interacts with SARS-CoV-2 ORF3A protein; the interaction promotes ORF3A-induced autophagy but is unlikely to be involved in ORF3A-mediated induction of reticulophagy. As to quaternary structure, homodimer and higher order homooligomer. Oligomerization is crucial for its stability and function in the endoplasmic reticulum. Interacts with FLVCR2; this interaction is potentiated in the presence of heme. A soluble form arises by proteolytic removal of the membrane anchor. In terms of tissue distribution, expressed at higher levels in renal cancer tissue than in normal tissue (at protein level).

It is found in the endoplasmic reticulum membrane. It catalyses the reaction heme b + 3 reduced [NADPH--hemoprotein reductase] + 3 O2 = biliverdin IXalpha + CO + Fe(2+) + 3 oxidized [NADPH--hemoprotein reductase] + 3 H2O + H(+). Its function is as follows. Catalyzes the oxidative cleavage of heme at the alpha-methene bridge carbon, released as carbon monoxide (CO), to generate biliverdin IXalpha, while releasing the central heme iron chelate as ferrous iron. Affords protection against programmed cell death and this cytoprotective effect relies on its ability to catabolize free heme and prevent it from sensitizing cells to undergo apoptosis. Functionally, (Microbial infection) During SARS-COV-2 infection, promotes SARS-CoV-2 ORF3A-mediated autophagy but is unlikely to be required for ORF3A-mediated induction of reticulophagy. In terms of biological role, catalyzes the oxidative cleavage of heme at the alpha-methene bridge carbon, released as carbon monoxide (CO), to generate biliverdin IXalpha, while releasing the central heme iron chelate as ferrous iron. This chain is Heme oxygenase 1 (HMOX1), found in Homo sapiens (Human).